Here is a 447-residue protein sequence, read N- to C-terminus: UDP-glycosyltransferase 79B9 (447 aa).

UDP-alpha-D-glucose is bound by residues serine 260, 319-321 (VQQ), 336-344 (HCGFGSMWE), and 358-361 (LCDQ).

This sequence belongs to the UDP-glycosyltransferase family.

This Arabidopsis thaliana (Mouse-ear cress) protein is UDP-glycosyltransferase 79B9 (UGT79B9).